The chain runs to 204 residues: Ancillary SecYEG translocon subunit (204 aa).

The Cytoplasmic portion of the chain corresponds to 1–23; that stretch reads MAYSIEEEQEINQLKDWWKENGK. Residues 24 to 42 form a helical membrane-spanning segment; sequence TIIVAFILGVGGMFGWRYW. Topologically, residues 43–204 are periplasmic; the sequence is QTHQAEQIAQ…QMAKMKLNNL (162 aa).

Belongs to the YfgM family. Interacts with the SecYEG translocon. Forms a complex with PpiD.

Its subcellular location is the cell inner membrane. In terms of biological role, may mediate protein transfer from the SecYEG translocon to the periplasmic chaperone network via its periplasmic C-terminal region. This chain is Ancillary SecYEG translocon subunit, found in Haemophilus influenzae (strain ATCC 51907 / DSM 11121 / KW20 / Rd).